A 589-amino-acid chain; its full sequence is 2-succinyl-5-enolpyruvyl-6-hydroxy-3-cyclohexene-1-carboxylate synthase (589 aa).

This sequence belongs to the TPP enzyme family. MenD subfamily. In terms of assembly, homodimer. Requires Mg(2+) as cofactor. Mn(2+) is required as a cofactor. The cofactor is thiamine diphosphate.

It carries out the reaction isochorismate + 2-oxoglutarate + H(+) = 5-enolpyruvoyl-6-hydroxy-2-succinyl-cyclohex-3-ene-1-carboxylate + CO2. It participates in quinol/quinone metabolism; 1,4-dihydroxy-2-naphthoate biosynthesis; 1,4-dihydroxy-2-naphthoate from chorismate: step 2/7. The protein operates within quinol/quinone metabolism; menaquinone biosynthesis. Catalyzes the thiamine diphosphate-dependent decarboxylation of 2-oxoglutarate and the subsequent addition of the resulting succinic semialdehyde-thiamine pyrophosphate anion to isochorismate to yield 2-succinyl-5-enolpyruvyl-6-hydroxy-3-cyclohexene-1-carboxylate (SEPHCHC). This chain is 2-succinyl-5-enolpyruvyl-6-hydroxy-3-cyclohexene-1-carboxylate synthase, found in Myxococcus xanthus (strain DK1622).